The primary structure comprises 430 residues: MTASLKAIDGSAELTTLMTDLGRQARAAARTLALAPPEQKNRALEAMERAIRAGADKILAANAEDVADAKAAGTTSAFLDRLTLTPARVEAMAEGIAVVRGIADPVGTVTESWQRPNGMTIERVRVPLGVVAVIFESRPNVAADAGVLCLKSGNAVILRGGSESFRSCRAIHDRLVQGLREAGLPDAAITLVPTRDRAAVGLLLAGLDGSVDVIVPRGGKSLVARVESEARVPVFAHLEGVNHVYVDRSADLEMAKSIVLNAKMRRTGVCGAAETLLIDRAAATTHLAPLVTMLIDSGCEVRGDQTVQQVDPRVKPASDEDWDTEYLDAVIAAKLVDGVDGAIVHIHNHGSHHTDAIVAEDAQAAAKFLGEVDSAIVLHNASTQFADGGEFGFGAEIGIATGKFHARGPVGAEQLTTFKYRIHGSGQTRP.

It belongs to the gamma-glutamyl phosphate reductase family.

It localises to the cytoplasm. The catalysed reaction is L-glutamate 5-semialdehyde + phosphate + NADP(+) = L-glutamyl 5-phosphate + NADPH + H(+). It participates in amino-acid biosynthesis; L-proline biosynthesis; L-glutamate 5-semialdehyde from L-glutamate: step 2/2. In terms of biological role, catalyzes the NADPH-dependent reduction of L-glutamate 5-phosphate into L-glutamate 5-semialdehyde and phosphate. The product spontaneously undergoes cyclization to form 1-pyrroline-5-carboxylate. The sequence is that of Gamma-glutamyl phosphate reductase from Rhodopseudomonas palustris (strain ATCC BAA-98 / CGA009).